We begin with the raw amino-acid sequence, 314 residues long: Malate dehydrogenase (314 aa).

Position 9–15 (9–15 (IGVGNVG)) interacts with NAD(+). Residues Arg84 and Arg90 each contribute to the substrate site. Residues Asn97 and 120 to 122 (ISN) contribute to the NAD(+) site. Asn122 and Arg153 together coordinate substrate. His177 acts as the Proton acceptor in catalysis.

It belongs to the LDH/MDH superfamily.

The catalysed reaction is (S)-malate + NAD(+) = oxaloacetate + NADH + H(+). Catalyzes the reversible oxidation of malate to oxaloacetate. In Aliarcobacter butzleri (strain RM4018) (Arcobacter butzleri), this protein is Malate dehydrogenase.